The chain runs to 89 residues: Large ribosomal subunit protein uL24 (89 aa).

It belongs to the universal ribosomal protein uL24 family. Part of the 50S ribosomal subunit.

Functionally, one of two assembly initiator proteins, it binds directly to the 5'-end of the 23S rRNA, where it nucleates assembly of the 50S subunit. One of the proteins that surrounds the polypeptide exit tunnel on the outside of the subunit. The sequence is that of Large ribosomal subunit protein uL24 from Chlorobium chlorochromatii (strain CaD3).